A 25-amino-acid chain; its full sequence is LKPDEELQGPGGVLSRGYFVFRPRN.

Residue N25 is modified to Asparagine amide.

Belongs to the NmU family.

It is found in the secreted. Its function is as follows. Stimulates uterine smooth muscle contraction and causes selective vasoconstriction. This chain is Neuromedin-U-25, found in Rana temporaria (European common frog).